Consider the following 125-residue polypeptide: Large ribosomal subunit protein bL20 (125 aa).

The protein belongs to the bacterial ribosomal protein bL20 family.

Binds directly to 23S ribosomal RNA and is necessary for the in vitro assembly process of the 50S ribosomal subunit. It is not involved in the protein synthesizing functions of that subunit. This is Large ribosomal subunit protein bL20 from Methylobacterium nodulans (strain LMG 21967 / CNCM I-2342 / ORS 2060).